Consider the following 605-residue polypeptide: Phosphoenolpyruvate carboxykinase [GTP] (605 aa).

Substrate contacts are provided by residues Arg79 and 218 to 220 (YGG). Mn(2+) contacts are provided by Lys227 and His247. Ser269 serves as a coordination point for substrate. Residue 270–275 (ACGKTN) participates in GTP binding. Residue Cys271 is part of the active site. A Mn(2+)-binding site is contributed by Asp294. Residues 364–381 (LTDWKGRDWTPQSDEKAA) are compositionally biased toward basic and acidic residues. Residues 364 to 385 (LTDWKGRDWTPQSDEKAAHPNS) form a disordered region. 384–386 (NSR) provides a ligand contact to substrate. Residues Arg386, Arg417, and 513–516 (FGEN) contribute to the GTP site.

It belongs to the phosphoenolpyruvate carboxykinase [GTP] family. In terms of assembly, monomer. Requires Mn(2+) as cofactor.

The protein localises to the cytoplasm. It catalyses the reaction oxaloacetate + GTP = phosphoenolpyruvate + GDP + CO2. It participates in carbohydrate biosynthesis; gluconeogenesis. Catalyzes the conversion of oxaloacetate (OAA) to phosphoenolpyruvate (PEP), the rate-limiting step in the metabolic pathway that produces glucose from lactate and other precursors derived from the citric acid cycle. The chain is Phosphoenolpyruvate carboxykinase [GTP] from Saccharopolyspora erythraea (strain ATCC 11635 / DSM 40517 / JCM 4748 / NBRC 13426 / NCIMB 8594 / NRRL 2338).